Reading from the N-terminus, the 157-residue chain is uncharacterized protein (157 aa).

This is an uncharacterized protein from Caenorhabditis elegans.